Consider the following 337-residue polypeptide: Phosphate acyltransferase (337 aa).

The protein belongs to the PlsX family. Homodimer. Probably interacts with PlsY.

It is found in the cytoplasm. It carries out the reaction a fatty acyl-[ACP] + phosphate = an acyl phosphate + holo-[ACP]. Its pathway is lipid metabolism; phospholipid metabolism. Its function is as follows. Catalyzes the reversible formation of acyl-phosphate (acyl-PO(4)) from acyl-[acyl-carrier-protein] (acyl-ACP). This enzyme utilizes acyl-ACP as fatty acyl donor, but not acyl-CoA. The protein is Phosphate acyltransferase of Acidobacterium capsulatum (strain ATCC 51196 / DSM 11244 / BCRC 80197 / JCM 7670 / NBRC 15755 / NCIMB 13165 / 161).